Here is a 514-residue protein sequence, read N- to C-terminus: 1-pyrroline-5-carboxylate dehydrogenase (514 aa).

Active-site residues include glutamate 286 and cysteine 320.

Belongs to the aldehyde dehydrogenase family. RocA subfamily.

The catalysed reaction is L-glutamate 5-semialdehyde + NAD(+) + H2O = L-glutamate + NADH + 2 H(+). Its pathway is amino-acid degradation; L-proline degradation into L-glutamate; L-glutamate from L-proline: step 2/2. This chain is 1-pyrroline-5-carboxylate dehydrogenase, found in Staphylococcus aureus (strain MSSA476).